The chain runs to 109 residues: Cell division protein ZapA (109 aa).

A coiled-coil region spans residues proline 21–arginine 99.

This sequence belongs to the ZapA family. Type 1 subfamily. As to quaternary structure, homodimer. Interacts with FtsZ.

Its subcellular location is the cytoplasm. In terms of biological role, activator of cell division through the inhibition of FtsZ GTPase activity, therefore promoting FtsZ assembly into bundles of protofilaments necessary for the formation of the division Z ring. It is recruited early at mid-cell but it is not essential for cell division. The chain is Cell division protein ZapA from Klebsiella pneumoniae (strain 342).